Reading from the N-terminus, the 664-residue chain is Acetolactate synthase 2, chloroplastic (664 aa).

The segment covering 1-34 (MAAAAAAPSPSFSKTLSSSSSKSSTLLPRSTFPF) has biased composition (low complexity). The disordered stretch occupies residues 1–51 (MAAAAAAPSPSFSKTLSSSSSKSSTLLPRSTFPFPHHPHKTTPPPLHLTPT). The N-terminal 91 residues, 1–91 (MAAAAAAPSP…VSRFAPDEPR (91 aa)), are a transit peptide targeting the chloroplast. Glu-138 serves as a coordination point for thiamine diphosphate. An intrachain disulfide couples Cys-158 to Cys-304. FAD is bound by residues Arg-240, 346-367 (HGTV…FGVR), and 389-408 (DIDS…ICAD). A thiamine pyrophosphate binding region spans residues 481–561 (QHQMWAAQYY…VKIMLLNNQH (81 aa)). Residues Asp-532 and Asn-559 each contribute to the Mg(2+) site.

It belongs to the TPP enzyme family. Mg(2+) serves as cofactor. Thiamine diphosphate is required as a cofactor.

It localises to the plastid. The protein resides in the chloroplast. It carries out the reaction 2 pyruvate + H(+) = (2S)-2-acetolactate + CO2. It participates in amino-acid biosynthesis; L-isoleucine biosynthesis; L-isoleucine from 2-oxobutanoate: step 1/4. The protein operates within amino-acid biosynthesis; L-valine biosynthesis; L-valine from pyruvate: step 1/4. The polypeptide is Acetolactate synthase 2, chloroplastic (ALS SURB) (Nicotiana tabacum (Common tobacco)).